We begin with the raw amino-acid sequence, 237 residues long: Large ribosomal subunit protein uL1 (237 aa).

It belongs to the universal ribosomal protein uL1 family. As to quaternary structure, part of the 50S ribosomal subunit.

In terms of biological role, binds directly to 23S rRNA. The L1 stalk is quite mobile in the ribosome, and is involved in E site tRNA release. Its function is as follows. Protein L1 is also a translational repressor protein, it controls the translation of the L11 operon by binding to its mRNA. The protein is Large ribosomal subunit protein uL1 of Leptothrix cholodnii (strain ATCC 51168 / LMG 8142 / SP-6) (Leptothrix discophora (strain SP-6)).